A 134-amino-acid polypeptide reads, in one-letter code: Outer membrane lipoprotein RcsF (134 aa).

A signal peptide spans 1-15; that stretch reads MRALPICLVALMLSG. Residue Cys16 is the site of N-palmitoyl cysteine attachment. Cys16 carries S-diacylglycerol cysteine lipidation. Disordered stretches follow at residues 22–48 and 67–88; these read SPVE…RATP and GEVS…IPTA. The segment covering 72-82 has biased composition (polar residues); sequence DSCQASNQDSP. 2 disulfide bridges follow: Cys74-Cys118 and Cys109-Cys124.

Belongs to the RcsF family.

The protein localises to the cell outer membrane. In terms of biological role, essential component of the Rcs signaling system, which controls transcription of numerous genes. Plays a role in signal transduction from the cell surface to the histidine kinase RcsC. May detect outer membrane defects. This is Outer membrane lipoprotein RcsF from Escherichia coli O6:H1 (strain CFT073 / ATCC 700928 / UPEC).